The following is a 522-amino-acid chain: Glucans biosynthesis protein G (522 aa).

Positions 1 to 33 (MLDNKFGFKQRVASLRWLSAAIMLSVSAVPAWA) are cleaved as a signal peptide.

It belongs to the OpgD/OpgG family.

It localises to the periplasm. Its pathway is glycan metabolism; osmoregulated periplasmic glucan (OPG) biosynthesis. In terms of biological role, involved in the biosynthesis of osmoregulated periplasmic glucans (OPGs). The protein is Glucans biosynthesis protein G of Pectobacterium carotovorum subsp. carotovorum (strain PC1).